The primary structure comprises 1058 residues: Carbamoyl phosphate synthase large chain (1058 aa).

A carboxyphosphate synthetic domain region spans residues 1 to 401; the sequence is MPKRKDIKTI…SLLKAIRSLE (401 aa). Residues Arg129, Arg169, Gly175, Gly176, Lys208, Ile210, Glu215, Gly241, Ile242, His243, Gln284, and Glu298 each contribute to the ATP site. Residues 133 to 327 form the ATP-grasp 1 domain; that stretch reads RDLMNELNEP…IAKIAAKIAV (195 aa). Mg(2+) is bound by residues Gln284, Glu298, and Asn300. Residues Gln284, Glu298, and Asn300 each coordinate Mn(2+). The segment at 402–546 is oligomerization domain; the sequence is YGVHHLGLPN…YSTYEFENES (145 aa). Residues 547–929 are carbamoyl phosphate synthetic domain; sequence TRSDKEKIVV…ALYKGLTAAG (383 aa). One can recognise an ATP-grasp 2 domain in the interval 671–861; sequence EKLLIGLKIP…VANIAMQCIL (191 aa). Arg707, Arg746, Leu748, Glu752, Gly777, Val778, His779, Ser780, Gln820, and Glu832 together coordinate ATP. The Mg(2+) site is built by Gln820, Glu832, and Asn834. Residues Gln820, Glu832, and Asn834 each contribute to the Mn(2+) site. Positions 930–1058 constitute an MGS-like domain; it reads IKIKDYGRVL…ESMSFRVQTL (129 aa). Residues 930-1058 are allosteric domain; the sequence is IKIKDYGRVL…ESMSFRVQTL (129 aa).

This sequence belongs to the CarB family. Composed of two chains; the small (or glutamine) chain promotes the hydrolysis of glutamine to ammonia, which is used by the large (or ammonia) chain to synthesize carbamoyl phosphate. Tetramer of heterodimers (alpha,beta)4. It depends on Mg(2+) as a cofactor. Mn(2+) is required as a cofactor.

The catalysed reaction is hydrogencarbonate + L-glutamine + 2 ATP + H2O = carbamoyl phosphate + L-glutamate + 2 ADP + phosphate + 2 H(+). The enzyme catalyses hydrogencarbonate + NH4(+) + 2 ATP = carbamoyl phosphate + 2 ADP + phosphate + 2 H(+). The protein operates within amino-acid biosynthesis; L-arginine biosynthesis; carbamoyl phosphate from bicarbonate: step 1/1. Its pathway is pyrimidine metabolism; UMP biosynthesis via de novo pathway; (S)-dihydroorotate from bicarbonate: step 1/3. Its function is as follows. Large subunit of the glutamine-dependent carbamoyl phosphate synthetase (CPSase). CPSase catalyzes the formation of carbamoyl phosphate from the ammonia moiety of glutamine, carbonate, and phosphate donated by ATP, constituting the first step of 2 biosynthetic pathways, one leading to arginine and/or urea and the other to pyrimidine nucleotides. The large subunit (synthetase) binds the substrates ammonia (free or transferred from glutamine from the small subunit), hydrogencarbonate and ATP and carries out an ATP-coupled ligase reaction, activating hydrogencarbonate by forming carboxy phosphate which reacts with ammonia to form carbamoyl phosphate. The polypeptide is Carbamoyl phosphate synthase large chain (Fusobacterium nucleatum subsp. nucleatum (strain ATCC 25586 / DSM 15643 / BCRC 10681 / CIP 101130 / JCM 8532 / KCTC 2640 / LMG 13131 / VPI 4355)).